Consider the following 389-residue polypeptide: Succinate--CoA ligase [ADP-forming] subunit beta (389 aa).

The 228-residue stretch at Lys-9–Lys-236 folds into the ATP-grasp domain. Residues Lys-45, Gly-52–Gly-54, Ser-94, and Glu-99 each bind ATP. Residues Asn-191 and Asp-205 each coordinate Mg(2+). Substrate is bound by residues Asn-256 and Gly-318–Thr-320.

It belongs to the succinate/malate CoA ligase beta subunit family. Heterotetramer of two alpha and two beta subunits. It depends on Mg(2+) as a cofactor.

It carries out the reaction succinate + ATP + CoA = succinyl-CoA + ADP + phosphate. The catalysed reaction is GTP + succinate + CoA = succinyl-CoA + GDP + phosphate. It functions in the pathway carbohydrate metabolism; tricarboxylic acid cycle; succinate from succinyl-CoA (ligase route): step 1/1. Its function is as follows. Succinyl-CoA synthetase functions in the citric acid cycle (TCA), coupling the hydrolysis of succinyl-CoA to the synthesis of either ATP or GTP and thus represents the only step of substrate-level phosphorylation in the TCA. The beta subunit provides nucleotide specificity of the enzyme and binds the substrate succinate, while the binding sites for coenzyme A and phosphate are found in the alpha subunit. This Saccharopolyspora erythraea (strain ATCC 11635 / DSM 40517 / JCM 4748 / NBRC 13426 / NCIMB 8594 / NRRL 2338) protein is Succinate--CoA ligase [ADP-forming] subunit beta.